A 1372-amino-acid polypeptide reads, in one-letter code: DNA-directed RNA polymerase subunit beta' (1372 aa).

Cysteine 69, cysteine 71, cysteine 84, and cysteine 87 together coordinate Zn(2+). The Mg(2+) site is built by aspartate 460, aspartate 462, and aspartate 464. Zn(2+) contacts are provided by cysteine 808, cysteine 882, cysteine 889, and cysteine 892.

Belongs to the RNA polymerase beta' chain family. As to quaternary structure, the RNAP catalytic core consists of 2 alpha, 1 beta, 1 beta' and 1 omega subunit. When a sigma factor is associated with the core the holoenzyme is formed, which can initiate transcription. Requires Mg(2+) as cofactor. Zn(2+) is required as a cofactor.

It carries out the reaction RNA(n) + a ribonucleoside 5'-triphosphate = RNA(n+1) + diphosphate. DNA-dependent RNA polymerase catalyzes the transcription of DNA into RNA using the four ribonucleoside triphosphates as substrates. This chain is DNA-directed RNA polymerase subunit beta', found in Rickettsia bellii (strain OSU 85-389).